The primary structure comprises 259 residues: Adenosylcobinamide-GDP ribazoletransferase (259 aa).

Helical transmembrane passes span 43–63 (LAGA…LGLG), 64–84 (ASSM…TGAL), 116–136 (FGVL…ASLV), 141–161 (PINV…LMVW), and 185–205 (TLYT…APVT).

Belongs to the CobS family. Mg(2+) is required as a cofactor.

The protein localises to the cell inner membrane. The enzyme catalyses alpha-ribazole + adenosylcob(III)inamide-GDP = adenosylcob(III)alamin + GMP + H(+). The catalysed reaction is alpha-ribazole 5'-phosphate + adenosylcob(III)inamide-GDP = adenosylcob(III)alamin 5'-phosphate + GMP + H(+). The protein operates within cofactor biosynthesis; adenosylcobalamin biosynthesis; adenosylcobalamin from cob(II)yrinate a,c-diamide: step 7/7. In terms of biological role, joins adenosylcobinamide-GDP and alpha-ribazole to generate adenosylcobalamin (Ado-cobalamin). Also synthesizes adenosylcobalamin 5'-phosphate from adenosylcobinamide-GDP and alpha-ribazole 5'-phosphate. This Allorhizobium ampelinum (strain ATCC BAA-846 / DSM 112012 / S4) (Agrobacterium vitis (strain S4)) protein is Adenosylcobinamide-GDP ribazoletransferase.